Here is a 356-residue protein sequence, read N- to C-terminus: L-Ala-D/L-Glu epimerase (356 aa).

161-163 (KVK) contacts substrate. Residues D191, E219, and D244 each coordinate Mg(2+). Substrate contacts are provided by residues K268 and 320–322 (DLD).

Belongs to the mandelate racemase/muconate lactonizing enzyme family. Mg(2+) serves as cofactor.

The catalysed reaction is L-alanyl-L-glutamate = L-alanyl-D-glutamate. Dipeptide epimerase with a preference for substrates containing a Glu residue in the second position. Catalyzes the epimerization of L-Ala-L-Glu, L-Ser-L-Glu, L-Thr-L-Glu, L-Val-L-Glu, L-Gly-L-Glu and L-Thr-L-Glu (in vitro). May play a role in the metabolism of the murein peptide, of which L-Ala-D-Glu is a component. The chain is L-Ala-D/L-Glu epimerase from Francisella tularensis subsp. novicida (strain U112).